Consider the following 498-residue polypeptide: Pentatricopeptide repeat-containing protein At3g61360 (498 aa).

PPR repeat units lie at residues 102–132, 138–172, 175–205, 209–243, 244–278, 279–313, 314–348, 349–385, and 386–420; these read TSDSFEKTLHILARMRYFDQAWALMAEVRKD, SFKSMSILLCKIAKFGSYEETLEAFVKMEKEIFRK, GVDEFNILLRAFCTEREMKEARSIFEKLHSR, DVKTMNILLLGFKEAGDVTATELFYHEMVKRGFKP, NSVTYGIRIDGFCKKRNFGEALRLFEDMDRLDFDI, TVQILTTLIHGSGVARNKIKARQLFDEISKRGLTP, DCGAYNALMSSLMKCGDVSGAIKVMKEMEEKGIEP, DSVTFHSMFIGMMKSKEFGFNGVCEYYQKMKERSLVP, and KTPTIVMLMKLFCHNGEVNLGLDLWKYMLEKGYCP.

It belongs to the PPR family. P subfamily.

The polypeptide is Pentatricopeptide repeat-containing protein At3g61360 (Arabidopsis thaliana (Mouse-ear cress)).